Reading from the N-terminus, the 98-residue chain is NADH-ubiquinone oxidoreductase chain 4L (98 aa).

Helical transmembrane passes span 1 to 21 (MSVV…GLLV), 30 to 50 (LLCL…TVLT), and 61 to 81 (IILL…LVMI).

Belongs to the complex I subunit 4L family. Core subunit of respiratory chain NADH dehydrogenase (Complex I) which is composed of 45 different subunits.

It localises to the mitochondrion inner membrane. It carries out the reaction a ubiquinone + NADH + 5 H(+)(in) = a ubiquinol + NAD(+) + 4 H(+)(out). Its function is as follows. Core subunit of the mitochondrial membrane respiratory chain NADH dehydrogenase (Complex I) which catalyzes electron transfer from NADH through the respiratory chain, using ubiquinone as an electron acceptor. Part of the enzyme membrane arm which is embedded in the lipid bilayer and involved in proton translocation. The sequence is that of NADH-ubiquinone oxidoreductase chain 4L (MT-ND4L) from Lontra canadensis (North American river otter).